A 223-amino-acid chain; its full sequence is UPF0441 protein YgiB (223 aa).

Residues 178 to 195 (TVPKTAMAPKPATTTTVT) show a composition bias toward low complexity. The disordered stretch occupies residues 178 to 223 (TVPKTAMAPKPATTTTVTRGGFGESIAKQSTMQRSATGTSSRSMGG). A compositionally biased stretch (polar residues) spans 204-223 (AKQSTMQRSATGTSSRSMGG).

This sequence belongs to the UPF0441 family.

In Shigella boydii serotype 4 (strain Sb227), this protein is UPF0441 protein YgiB.